The chain runs to 354 residues: 3'-hydroxy-N-methyl-(S)-coclaurine 4'-O-methyltransferase 1 (354 aa).

Aspartate 223 serves as a coordination point for S-adenosyl-L-methionine. Residue histidine 261 is the Proton acceptor of the active site.

The protein belongs to the class I-like SAM-binding methyltransferase superfamily. Cation-independent O-methyltransferase family. COMT subfamily. Expressed in roots, stems, leaves and flowers. Restricted to sieve elements of the phloem adjacent or proximal to laticifers.

It carries out the reaction (S)-3'-hydroxy-N-methylcoclaurine + S-adenosyl-L-methionine = (S)-reticuline + S-adenosyl-L-homocysteine + H(+). Its pathway is alkaloid biosynthesis; (S)-reticuline biosynthesis; (S)-reticuline from (S)-norcoclaurine: step 4/4. Involved in the biosynthesis of benzylisoquinoline alkaloids. Catalyzes the transfer of the methyl group to the 4'-hydroxyl group of 3'-hydroxy-N-methylcoclaurine to form reticuline. Also involved in the papaverine biosynthesis. This is 3'-hydroxy-N-methyl-(S)-coclaurine 4'-O-methyltransferase 1 from Papaver somniferum (Opium poppy).